Here is a 546-residue protein sequence, read N- to C-terminus: Chaperonin GroEL 2 (546 aa).

ATP is bound by residues 30 to 33 (TLGP), K51, 87 to 91 (DGTTT), G415, 479 to 481 (NAA), and D495. The segment at 524–546 (APKDAPPAAPAGVPGAGGPGFDF) is disordered. The span at 537–546 (PGAGGPGFDF) shows a compositional bias: gly residues.

Belongs to the chaperonin (HSP60) family. As to quaternary structure, forms a cylinder of 14 subunits composed of two heptameric rings stacked back-to-back. Interacts with the co-chaperonin GroES.

It is found in the cytoplasm. The catalysed reaction is ATP + H2O + a folded polypeptide = ADP + phosphate + an unfolded polypeptide.. Its function is as follows. Together with its co-chaperonin GroES, plays an essential role in assisting protein folding. The GroEL-GroES system forms a nano-cage that allows encapsulation of the non-native substrate proteins and provides a physical environment optimized to promote and accelerate protein folding. The protein is Chaperonin GroEL 2 of Burkholderia pseudomallei (strain 1710b).